Consider the following 602-residue polypeptide: Fumarate reductase flavoprotein subunit (602 aa).

FAD is bound by residues 12 to 16 (GAGGA), 36 to 38 (ISK), 44 to 52 (SHTVAAEGG), 156 to 158 (HFV), 192 to 193 (AT), and D212. Residue H45 is modified to Tele-8alpha-FAD histidine. Active-site residues include H233 and R249. Residues 356–357 (HY), E380, and 391–397 (RLGSNSL) contribute to the FAD site. The tract at residues 581-602 (YGGEADAADKAEAANKKEKANG) is disordered. Over residues 587–602 (AADKAEAANKKEKANG) the composition is skewed to basic and acidic residues.

Belongs to the FAD-dependent oxidoreductase 2 family. FRD/SDH subfamily. As to quaternary structure, part of an enzyme complex containing four subunits: a flavoprotein (FrdA), an iron-sulfur protein (FrdB), and two hydrophobic anchor proteins (FrdC and FrdD). Can be cross-linked to SdhE. Purified from membrane fractions associated with protoporphyrinogen IX dehydrogenase (hemG). Requires FAD as cofactor.

The protein resides in the cell inner membrane. It catalyses the reaction a quinone + succinate = fumarate + a quinol. The enzyme catalyses a menaquinone + succinate = a menaquinol + fumarate. Inhibited by oxaloacetate, a substrate analog. Its function is as follows. Two distinct, membrane-bound, FAD-containing enzymes are responsible for the catalysis of fumarate and succinate interconversion; fumarate reductase is used during anaerobic growth, and succinate dehydrogenase is used during aerobic growth. The QFR enzyme complex binds 2 quinones in or near the membrane; 1 near the [3Fe-4S] cluster (QP is proximal to the [3Fe-4S] cluster, on the cytoplasmic side of the membrane) while QD (the distal cluster) is on the other side of the membrane. It is not clear if both of the quinol-binding sites are functionally relevant. The protein is Fumarate reductase flavoprotein subunit (frdA) of Escherichia coli (strain K12).